Consider the following 192-residue polypeptide: Cytidylate kinase (192 aa).

ATP is bound at residue 7-15 (GPPGSGKST).

Belongs to the cytidylate kinase family. Type 2 subfamily.

It is found in the cytoplasm. The catalysed reaction is CMP + ATP = CDP + ADP. The enzyme catalyses dCMP + ATP = dCDP + ADP. In Halorubrum lacusprofundi (strain ATCC 49239 / DSM 5036 / JCM 8891 / ACAM 34), this protein is Cytidylate kinase.